We begin with the raw amino-acid sequence, 232 residues long: Cytidylate kinase (232 aa).

19-27 is a binding site for ATP; sequence GPAGVGKTT.

Belongs to the cytidylate kinase family. Type 1 subfamily.

It is found in the cytoplasm. The catalysed reaction is CMP + ATP = CDP + ADP. It carries out the reaction dCMP + ATP = dCDP + ADP. The polypeptide is Cytidylate kinase (Nitratidesulfovibrio vulgaris (strain DP4) (Desulfovibrio vulgaris)).